The sequence spans 278 residues: MEENMEEGQTQKGCFECCIKCLGGIPYASLIATILLYAGVALFCGCGHEALSGTVNILQTYFEMARTAGDTLDVFTMIDIFKYVIYGIAAAFFVYGILLMVEGFFTTGAIKDLYGDFKITTCGRCVSAWFIMLTYLFMLAWLGVTAFTSLPVYMYFNLWTICRNTTLVEGANLCLDLRQFGIVTIGEEKKICTVSENFLRMCESTELNMTFHLFIVALAGAGAAVIAMVHYLMVLSANWAYVKDACRMQKYEDIKSKEEQELHDIHSTRSKERLNAYT.

Met-1 is modified (N-acetylmethionine). Residues 1 to 22 (MEENMEEGQTQKGCFECCIKCL) are Cytoplasmic-facing. A helical membrane pass occupies residues 23–43 (GGIPYASLIATILLYAGVALF). Over 44–84 (CGCGHEALSGTVNILQTYFEMARTAGDTLDVFTMIDIFKYV) the chain is Extracellular. Residues 85–105 (IYGIAAAFFVYGILLMVEGFF) traverse the membrane as a helical segment. Topologically, residues 106 to 127 (TTGAIKDLYGDFKITTCGRCVS) are cytoplasmic. Residues 128–148 (AWFIMLTYLFMLAWLGVTAFT) traverse the membrane as a helical segment. Residues 149–213 (SLPVYMYFNL…STELNMTFHL (65 aa)) lie on the Extracellular side of the membrane. Asn-164 carries an N-linked (GlcNAc...) asparagine glycan. The cysteines at positions 174 and 192 are disulfide-linked. An N-linked (GlcNAc...) asparagine glycan is attached at Asn-208. Residues 214–234 (FIVALAGAGAAVIAMVHYLMV) traverse the membrane as a helical segment. Topologically, residues 235-278 (LSANWAYVKDACRMQKYEDIKSKEEQELHDIHSTRSKERLNAYT) are cytoplasmic. Ser-256 is subject to Phosphoserine. Thr-278 carries the post-translational modification Phosphothreonine.

Belongs to the myelin proteolipid protein family. As to quaternary structure, interacts with OPRM1. Interacts with palmitoyltransferase ZDHHC17/HIP14; the interaction leads to palmitoylation of GPM6A. In terms of processing, N-glycosylated. Palmitoylated by ZDHHC17/HIP14.

The protein localises to the cell membrane. It localises to the cell projection. It is found in the axon. Its subcellular location is the growth cone. The protein resides in the dendritic spine. The protein localises to the filopodium. It localises to the neuron projection. In terms of biological role, involved in neuronal differentiation, including differentiation and migration of neuronal stem cells. Plays a role in neuronal plasticity and is involved in neurite and filopodia outgrowth, filopodia motility and probably synapse formation. GPM6A-induced filopodia formation involves mitogen-activated protein kinase (MAPK) and Src signaling pathways. May be involved in neuronal NGF-dependent Ca(2+) influx. May be involved in regulation of endocytosis and intracellular trafficking of G-protein-coupled receptors (GPCRs); may enhance internalization and recycling of mu-type opioid receptor. This is Neuronal membrane glycoprotein M6-a (GPM6A) from Bos taurus (Bovine).